Here is a 537-residue protein sequence, read N- to C-terminus: Pancreatic secretory granule membrane major glycoprotein GP2 (537 aa).

The first 28 residues, Met-1–Ala-28, serve as a signal peptide directing secretion. The segment at Ser-41–Phe-60 is beta hairpin. Intrachain disulfides connect Cys-48–Cys-59, Cys-63–Cys-157, Cys-85–Cys-172, Cys-107–Cys-145, Cys-113–Cys-177, Cys-138–Cys-146, Cys-190–Cys-200, Cys-194–Cys-209, Cys-211–Cys-241, Cys-229–Cys-320, and Cys-261–Cys-284. A D10C region spans residues Asp-61–Gly-81. The N-linked (GlcNAc...) (high mannose) asparagine glycan is linked to Asn-65. Asn-88, Asn-122, and Asn-134 each carry an N-linked (GlcNAc...) asparagine glycan. The EGF-like domain occupies Val-186–Gly-230. N-linked (GlcNAc...) asparagine glycans are attached at residues Asn-204, Asn-216, and Asn-260. The ZP-N stretch occupies residues Asp-228–Ala-321. The ZP domain maps to Asp-228–Ser-484. Residues Asn-291 and Asn-342 are each glycosylated (N-linked (GlcNAc...) asparagine). Residues Tyr-322 to Val-345 form a flexible ZP-N/ZP-C linker region. Positions Asp-346 to Leu-357 are internal hydrophobic patch (IHP). Residues Asp-346–Ser-484 form a ZP-C region. A glycan (N-linked (GlcNAc...) asparagine) is linked at Asn-362. Disulfide bonds link Cys-401–Cys-461, Cys-422–Cys-477, and Cys-466–Cys-473. The segment at Leu-491–Pro-499 is external hydrophobic patch (EHP). A lipid anchor (GPI-anchor amidated asparagine) is attached at Asn-512. A propeptide spans Gly-513–Phe-537 (removed in mature form).

As to quaternary structure, interacts with SYCN. Interacts with bacterial adhesin fimH. Post-translationally, N-glycosylated. Glycosylated Asn-65 may be required for interaction with bacterial adhesin fimH. As to expression, expressed in pancreas (at protein level). Specifically expressed by M (microfold) cells which are atypical epithelial cells of the intestine (at protein level).

Its subcellular location is the zymogen granule membrane. The protein resides in the secreted. It localises to the cell membrane. It is found in the apical cell membrane. The protein localises to the membrane raft. Its subcellular location is the endosome. Functions as an intestinal M-cell transcytotic receptor specific for type-I-piliated bacteria that participates in the mucosal immune response toward these bacteria. At the apical membrane of M-cells it binds fimH, a protein of the bacteria type I pilus tip. Internalizes bound bacteria, like E.coli and S.typhimurium, from the lumen of the intestine and delivers them, through M-cells, to the underlying organized lymphoid follicles where they are captured by antigen-presenting dendritic cells to elicit a mucosal immune response. In Homo sapiens (Human), this protein is Pancreatic secretory granule membrane major glycoprotein GP2.